The following is a 306-amino-acid chain: Ribonuclease Z (306 aa).

The Zn(2+) site is built by His-63, His-65, Asp-67, His-68, His-142, Asp-213, and His-271. Asp-67 functions as the Proton acceptor in the catalytic mechanism.

Belongs to the RNase Z family. As to quaternary structure, homodimer. The cofactor is Zn(2+).

The enzyme catalyses Endonucleolytic cleavage of RNA, removing extra 3' nucleotides from tRNA precursor, generating 3' termini of tRNAs. A 3'-hydroxy group is left at the tRNA terminus and a 5'-phosphoryl group is left at the trailer molecule.. Functionally, zinc phosphodiesterase, which displays some tRNA 3'-processing endonuclease activity. Probably involved in tRNA maturation, by removing a 3'-trailer from precursor tRNA. This Oceanobacillus iheyensis (strain DSM 14371 / CIP 107618 / JCM 11309 / KCTC 3954 / HTE831) protein is Ribonuclease Z.